The chain runs to 135 residues: Basic phospholipase A2 10 (135 aa).

Cystine bridges form between C28-C87, C42-C134, C44-C60, C59-C115, C66-C108, C76-C101, and C94-C106. Residues Y43, G45, and G47 each contribute to the Ca(2+) site. H63 is a catalytic residue. Residue D64 coordinates Ca(2+). The active site involves D109.

The protein belongs to the phospholipase A2 family. Group I subfamily. D49 sub-subfamily. The cofactor is Ca(2+). In terms of tissue distribution, expressed by the venom gland.

It is found in the secreted. The enzyme catalyses a 1,2-diacyl-sn-glycero-3-phosphocholine + H2O = a 1-acyl-sn-glycero-3-phosphocholine + a fatty acid + H(+). In terms of biological role, snake venom phospholipase A2 (PLA2) that inhibits neuromuscular transmission by blocking acetylcholine release from the nerve termini. PLA2 catalyzes the calcium-dependent hydrolysis of the 2-acyl groups in 3-sn-phosphoglycerides. This Bungarus fasciatus (Banded krait) protein is Basic phospholipase A2 10.